The sequence spans 236 residues: Uridylate kinase (236 aa).

10–13 is a binding site for ATP; it reads KLSG. Position 52 (Gly52) interacts with UMP. Residues Gly53 and Arg57 each coordinate ATP. Residues Asp72 and 133 to 140 each bind UMP; that span reads TGNPFFTT. The ATP site is built by Thr160, Tyr166, and Asp169.

The protein belongs to the UMP kinase family. Homohexamer.

The protein resides in the cytoplasm. It carries out the reaction UMP + ATP = UDP + ADP. Its pathway is pyrimidine metabolism; CTP biosynthesis via de novo pathway; UDP from UMP (UMPK route): step 1/1. Its activity is regulated as follows. Inhibited by UTP. Catalyzes the reversible phosphorylation of UMP to UDP. In Phocaeicola vulgatus (strain ATCC 8482 / DSM 1447 / JCM 5826 / CCUG 4940 / NBRC 14291 / NCTC 11154) (Bacteroides vulgatus), this protein is Uridylate kinase.